We begin with the raw amino-acid sequence, 323 residues long: Small ribosomal subunit protein uS2 (323 aa).

Residues V295–K323 are disordered.

Belongs to the universal ribosomal protein uS2 family.

The chain is Small ribosomal subunit protein uS2 from Mycoplasmoides gallisepticum (strain R(low / passage 15 / clone 2)) (Mycoplasma gallisepticum).